The chain runs to 1017 residues: MNFIKENSQVLIQRMGMTVIKQILDELFVWNVMNYEEVNVICGEKFEQDAARGVIHMILKKGSEACNLFLKSLEKWNYPLFQELHGLSLFHQMSEEDLDDLAQELKYFYQSPSFLNFYPLGEDIDIMFNLKSTFTEPVLWKKDQHHHRLEQLTLSGLLDTLQSPCIIEGESGKGKSTLLQRIAMLWASGECQALTKFKLVFFLRLSRAQGGLFETLSDQLLDIPDVISKQTFMARLLKLRQRVLFLLDGYNEFKAQNCPEIEALIKENHRFKNMVIVTTTTESLRHIRQFGALIAEVGDMTESSAQALIQEVLRKEFAEDLLLQIQKSRCLRNLMKTPLFVVITCAIQMGKSEFHSHTQTTLFCTFYDLLINKNRHKRKGLAPSEVTQSLDHCGDLALEGVFSRRFDFEPDDLSNVNEDVLLTTGLLCKYTAQRFKPKYKFFHQSFQEYTAGRRLSSLLTSGEPAEVTKGNGHLQKMVSISDITSKYSNLLLYTCGSSAEATRTVLKHLSSVYQHGSLLGLSVTKRPLWRQESMQNMKSTTVQEILKAININSFTECGINLFHESISTSSLSKEFEDFFRGKSLYINSENIPDYLFDFFEDLPNCASALDFVKLDFYGGAVRDISGNQDQEFSGTYIPSRAVSLFFNWKQEFKTLDVTLRDFCKLSKKDIKYLEKIFSSATSLRLHIKRCVGMAGSLSSVLSTCKNIHSLIVEASPLTLEDEQHITSVTNLQTLGVHDLQIQRLPGGLTDNLGNLKNLMKLILDNIQMNEEDALKLAEGLTNLKKMCLLRLTHLSDIGEGMDYIVKSLSAEPCDLKEIQLVSCCLSGNAVKTLAQNLHNLARLSILDLSENHLEKDGKEALQQLIDRLHILEQLTVLMLPWCGDVRVSLARLLEQLERVPQLVKLGLKNWRLTDAEIRILGVFFEKNPLENFQQLDLAGNCVSSDGWLAFMSGFENLKELVFFDFSTKGLLPDASLVRKLSHVLSKLTFLQEVQLVGWQLDDDDVSVLKGAFKLVIA.

Residues 1–88 enclose the CARD domain; the sequence is MNFIKENSQV…PLFQELHGLS (88 aa). Residues 95-298 form a nucleotide-binding domain (NBD) region; that stretch reads EEDLDDLAQE…QFGALIAEVG (204 aa). One can recognise an NACHT domain in the interval 163 to 476; that stretch reads SPCIIEGESG…VTKGNGHLQK (314 aa). 169 to 176 contacts ATP; it reads GESGKGKS. Positions 356–463 are winged-helix domain (WHD); the sequence is SHTQTTLFCT…RLSSLLTSGE (108 aa). S533 is modified (phosphoserine). LRR repeat units follow at residues 578–598, 649–672, 728–751, 755–778, 780–805, 817–840, 841–863, 871–895, 904–926, 929–956, 958–978, and 992–1014; these read FFRGKSLYINSENIPDYLFDF, KQEFKTLDVTLRDFCKLSKKDIKY, VTNLQTLGVHDLQIQRLPGGLTDN, LKNLMKLILDNIQMNEEDALKLAE, LTNLKKMCLLRLTHLSDIGEGMDYIV, EIQLVSCCLSGNAVKTLAQNLHNL, ARLSILDLSENHLEKDGKEALQQ, LEQLTVLMLPWCGDVRVSLARLLEQ, KLGLKNWRLTDAEIRILGVFFEK, LENFQQLDLAGNCVSSDGWLAFMSGFEN, KELVFFDFSTKGLLPDASLVR, and EVQLVGWQLDDDDVSVLKGAFKL.

Homooligomer; homooligomerizes following activation of Naip proteins by pathogenic proteins such as S.typhimurium (Salmonella) flagellin or PrgJ. Component of the NLRC4 inflammasome, at least composed of NLRC4, caspase-1 (CASP1) and some NAIP family member. Interacts with EIF2AK2/PKR. Post-translationally, phosphorylated at Ser-533 following infection of macrophages with S.typhimurium (Salmonella). Phosphorylation is essential for NLRC4 inflammasome function to promote caspase-1 activation and pyroptosis. PRKCD phosphorylates Ser-533 in vitro.

The protein localises to the cytoplasm. It is found in the cytosol. Functionally, key component of inflammasomes that indirectly senses specific proteins from pathogenic bacteria and fungi and responds by assembling an inflammasome complex that promotes caspase-1 activation, cytokine production and macrophage pyroptosis. The NLRC4 inflammasome is activated as part of the innate immune response to a range of intracellular bacteria. In Bos taurus (Bovine), this protein is NLR family CARD domain-containing protein 4 (NLRC4).